A 578-amino-acid chain; its full sequence is Proline--tRNA ligase (578 aa).

The protein belongs to the class-II aminoacyl-tRNA synthetase family. ProS type 1 subfamily. In terms of assembly, homodimer.

It localises to the cytoplasm. The enzyme catalyses tRNA(Pro) + L-proline + ATP = L-prolyl-tRNA(Pro) + AMP + diphosphate. In terms of biological role, catalyzes the attachment of proline to tRNA(Pro) in a two-step reaction: proline is first activated by ATP to form Pro-AMP and then transferred to the acceptor end of tRNA(Pro). As ProRS can inadvertently accommodate and process non-cognate amino acids such as alanine and cysteine, to avoid such errors it has two additional distinct editing activities against alanine. One activity is designated as 'pretransfer' editing and involves the tRNA(Pro)-independent hydrolysis of activated Ala-AMP. The other activity is designated 'posttransfer' editing and involves deacylation of mischarged Ala-tRNA(Pro). The misacylated Cys-tRNA(Pro) is not edited by ProRS. The polypeptide is Proline--tRNA ligase (Burkholderia ambifaria (strain ATCC BAA-244 / DSM 16087 / CCUG 44356 / LMG 19182 / AMMD) (Burkholderia cepacia (strain AMMD))).